We begin with the raw amino-acid sequence, 518 residues long: AarF domain-containing kinase 1 (518 aa).

One can recognise a Protein kinase domain in the interval 149–468; that stretch reads SFEREPLGTA…SKCCVQSSYA (320 aa). ATP contacts are provided by residues 155–163 and Lys177; that span reads LGTASLAQV. Asp309 (proton acceptor) is an active-site residue.

This sequence belongs to the protein kinase superfamily. ADCK protein kinase family.

It localises to the mitochondrion. Essential for maintaining mitochondrial cristae formation and mitochondrial function by acting via YME1L to regulate the mitochondrial structural proteins Opa1 and Mitofilin. This function is likely to be kinase-independent. Functions in tracheal development and larval molting probably by acting in sterol modification and/or intracellular lipid trafficking. The action of this enzyme is not yet clear. It is not known if it has protein kinase activity and what type of substrate it would phosphorylate (Ser, Thr or Tyr). The chain is AarF domain-containing kinase 1 from Drosophila melanogaster (Fruit fly).